We begin with the raw amino-acid sequence, 258 residues long: Small ribosomal subunit protein uS2 (258 aa).

The interval 226-258 is disordered; it reads AQNKDVEPVADKDEKPEAAPVDEAETATETTGE. A compositionally biased stretch (basic and acidic residues) spans 229-242; sequence KDVEPVADKDEKPE. Over residues 245-258 the composition is skewed to acidic residues; the sequence is PVDEAETATETTGE.

This sequence belongs to the universal ribosomal protein uS2 family.

The chain is Small ribosomal subunit protein uS2 from Solidesulfovibrio magneticus (strain ATCC 700980 / DSM 13731 / RS-1) (Desulfovibrio magneticus).